The following is a 470-amino-acid chain: Ubiquitin carboxyl-terminal hydrolase calypso (470 aa).

A UCH catalytic domain is found at 43 to 274; sequence GWLELESDPG…IRFNLMAVVP (232 aa). The Nucleophile role is filled by Cys-129. Catalysis depends on His-211, which acts as the Proton donor. The tract at residues 305-324 is disordered; the sequence is DEQGEGGNGDPQRPDTPSTL. The ULD domain maps to 373-401; it reads NYDKFICTFLSMLAHQGVLGELVSQHLLP. A positively charged C-terminal tail required for binding nucleosomes region spans residues 403–470; it reads KKISGQSAAN…KGRNKCKKRK (68 aa). Residues 422–451 show a composition bias toward low complexity; that stretch reads ANAGATAAGAAGAAPKSQQQQAAAAKNGKS. Positions 422–470 are disordered; it reads ANAGATAAGAAGAAPKSQQQQAAAAKNGKSPSKTPGRRRKGRNKCKKRK. Residues 456–470 are compositionally biased toward basic residues; sequence PGRRRKGRNKCKKRK.

This sequence belongs to the peptidase C12 family. BAP1 subfamily. As to quaternary structure, catalytic component of the polycomb repressive deubiquitinase (PR-DUB) complex, at least composed of caly/calypso, Asx and sba (MBD5/6 homolog). The PR-DUB complex associates with nucleosomes to mediate deubiquitination of histone H2AK118ub1 substrates; the association requires the positively charged C-terminal tail of caly, probably due to direct binding of DNA. Interacts (via ULD domain) with Asx (via DEUBAD domain); the interaction produces a stable heterodimer with a composite binding site for ubiquitin. Homodimerizes (via coiled-coil hinge-region between the UCH and ULD domains) to mediate assembly of 2 copies of the caly-Asx heterodimer into a bisymmetric tetramer; dimerization enhances PR-DUB association with nucleosomes.

The protein localises to the nucleus. It carries out the reaction Thiol-dependent hydrolysis of ester, thioester, amide, peptide and isopeptide bonds formed by the C-terminal Gly of ubiquitin (a 76-residue protein attached to proteins as an intracellular targeting signal).. In terms of biological role, catalytic component of the polycomb repressive deubiquitinase (PR-DUB) complex, a complex that specifically mediates deubiquitination of histone H2A monoubiquitinated at 'Lys-119' (H2AK118ub1). Mediates bisymmetric organization of the PR-DUB complex and is involved in association with nucleosomes to mediate deubiquitination. Does not deubiquitinate monoubiquitinated histone H2B. Required to maintain the transcriptionally repressive state of homeotic genes throughout development. The PR-DUB complex has weak or no activity toward 'Lys-48'- and 'Lys-63'-linked polyubiquitin chains. Polycomb group (PcG) protein. The sequence is that of Ubiquitin carboxyl-terminal hydrolase calypso from Drosophila ananassae (Fruit fly).